The following is a 232-amino-acid chain: MTAQKMSAQEIIAFIGNAEKKTNVKVTFEGELATAVPSSVTKLGNVLFGDWKDIEPLLANLTENKDYVVEQDGRNSAVPLLDKRHLNARIEPGAIIRDQVTIEDNAVVMMGAVINIGAEIGAGTMIDMGAILGGRATVGKNSHIGAGAVLAGVIEPASAEPVRIGDNVLVGANAVVIEGVQVGNGSVVAAGAIVTQDVPENVVVAGVPARIIKEIDEKTQQKTALEDALRNL.

This sequence belongs to the transferase hexapeptide repeat family. DapH subfamily.

The enzyme catalyses (S)-2,3,4,5-tetrahydrodipicolinate + acetyl-CoA + H2O = L-2-acetamido-6-oxoheptanedioate + CoA. The protein operates within amino-acid biosynthesis; L-lysine biosynthesis via DAP pathway; LL-2,6-diaminopimelate from (S)-tetrahydrodipicolinate (acetylase route): step 1/3. Functionally, catalyzes the transfer of an acetyl group from acetyl-CoA to tetrahydrodipicolinate. The chain is 2,3,4,5-tetrahydropyridine-2,6-dicarboxylate N-acetyltransferase from Streptococcus thermophilus (strain CNRZ 1066).